We begin with the raw amino-acid sequence, 387 residues long: 3-ketoacyl-CoA thiolase (387 aa).

The active-site Acyl-thioester intermediate is the Cys-91. Residues His-343 and Cys-373 each act as proton acceptor in the active site.

The protein belongs to the thiolase-like superfamily. Thiolase family. As to quaternary structure, heterotetramer of two alpha chains (FadB) and two beta chains (FadA).

The protein resides in the cytoplasm. It carries out the reaction an acyl-CoA + acetyl-CoA = a 3-oxoacyl-CoA + CoA. It functions in the pathway lipid metabolism; fatty acid beta-oxidation. In terms of biological role, catalyzes the final step of fatty acid oxidation in which acetyl-CoA is released and the CoA ester of a fatty acid two carbons shorter is formed. This chain is 3-ketoacyl-CoA thiolase, found in Escherichia coli O6:K15:H31 (strain 536 / UPEC).